We begin with the raw amino-acid sequence, 461 residues long: Cysteine--tRNA ligase (461 aa).

C28 is a Zn(2+) binding site. Positions 30–40 match the 'HIGH' region motif; sequence ITIYDLCHIGH. C209, H234, and E238 together coordinate Zn(2+). Positions 266–270 match the 'KMSKS' region motif; it reads KMSKS. An ATP-binding site is contributed by K269.

Belongs to the class-I aminoacyl-tRNA synthetase family. Monomer. The cofactor is Zn(2+).

The protein localises to the cytoplasm. The enzyme catalyses tRNA(Cys) + L-cysteine + ATP = L-cysteinyl-tRNA(Cys) + AMP + diphosphate. The polypeptide is Cysteine--tRNA ligase (Photorhabdus laumondii subsp. laumondii (strain DSM 15139 / CIP 105565 / TT01) (Photorhabdus luminescens subsp. laumondii)).